The primary structure comprises 397 residues: HTH-type transcriptional regulator GalR (397 aa).

HTH lysR-type domains follow at residues 7–64 (PNLM…MRLT) and 99–156 (FQAR…LQPT). 2 DNA-binding regions (H-T-H motif) span residues 24 to 43 (VSRA…RAIA) and 116 to 135 (MQTV…AALK).

This sequence belongs to the LysR transcriptional regulatory family.

Its function is as follows. Transcriptional regulator for the galBCD and galTAP operons, encoding genes of the gallate degradation pathway. The polypeptide is HTH-type transcriptional regulator GalR (galR) (Pseudomonas putida (strain ATCC 47054 / DSM 6125 / CFBP 8728 / NCIMB 11950 / KT2440)).